A 468-amino-acid chain; its full sequence is Glutamate--tRNA ligase (468 aa).

Positions 10 to 20 match the 'HIGH' region motif; sequence PSPTGDLHIGG. Cys99, Cys101, Cys126, and Asp128 together coordinate Zn(2+). The 'KMSKS' region motif lies at 236–240; the sequence is RLSKR. Lys239 provides a ligand contact to ATP.

It belongs to the class-I aminoacyl-tRNA synthetase family. Glutamate--tRNA ligase type 1 subfamily. As to quaternary structure, monomer. Zn(2+) is required as a cofactor.

The protein resides in the cytoplasm. It carries out the reaction tRNA(Glu) + L-glutamate + ATP = L-glutamyl-tRNA(Glu) + AMP + diphosphate. Its function is as follows. Catalyzes the attachment of glutamate to tRNA(Glu) in a two-step reaction: glutamate is first activated by ATP to form Glu-AMP and then transferred to the acceptor end of tRNA(Glu). This is Glutamate--tRNA ligase from Syntrophobacter fumaroxidans (strain DSM 10017 / MPOB).